The primary structure comprises 145 residues: uncharacterized protein (145 aa).

Positions 37 to 123 (GKGTNTAKSS…MDREASYFAP (87 aa)) are disordered. Polar residues predominate over residues 38–63 (KGTNTAKSSGGNNGTNLNAKRSNTTQ).

This is an uncharacterized protein from Caenorhabditis elegans.